Here is a 161-residue protein sequence, read N- to C-terminus: 2-C-methyl-D-erythritol 2,4-cyclodiphosphate synthase (161 aa).

Residues D8 and H10 each contribute to the a divalent metal cation site. Residues 8-10 (DLH) and 34-35 (HS) each bind 4-CDP-2-C-methyl-D-erythritol 2-phosphate. H42 serves as a coordination point for a divalent metal cation. Residues 56 to 58 (DIG), 100 to 106 (AEYPKML), and R142 contribute to the 4-CDP-2-C-methyl-D-erythritol 2-phosphate site.

It belongs to the IspF family. In terms of assembly, homotrimer. A divalent metal cation serves as cofactor.

The catalysed reaction is 4-CDP-2-C-methyl-D-erythritol 2-phosphate = 2-C-methyl-D-erythritol 2,4-cyclic diphosphate + CMP. The protein operates within isoprenoid biosynthesis; isopentenyl diphosphate biosynthesis via DXP pathway; isopentenyl diphosphate from 1-deoxy-D-xylulose 5-phosphate: step 4/6. In terms of biological role, involved in the biosynthesis of isopentenyl diphosphate (IPP) and dimethylallyl diphosphate (DMAPP), two major building blocks of isoprenoid compounds. Catalyzes the conversion of 4-diphosphocytidyl-2-C-methyl-D-erythritol 2-phosphate (CDP-ME2P) to 2-C-methyl-D-erythritol 2,4-cyclodiphosphate (ME-CPP) with a corresponding release of cytidine 5-monophosphate (CMP). This Buchnera aphidicola subsp. Acyrthosiphon pisum (strain 5A) protein is 2-C-methyl-D-erythritol 2,4-cyclodiphosphate synthase.